Here is a 360-residue protein sequence, read N- to C-terminus: N6-Methyl-AMP deaminase (360 aa).

Zn(2+) is bound by residues H23 and H25. Residues H25, N27, H73, 105 to 108, D147, and G180 each bind N(6)-methyl-AMP; that span reads STPR. H207 serves as a coordination point for Zn(2+). N(6)-methyl-AMP is bound by residues E210, D292, and D293. Residue E210 is the Proton donor of the active site. D292 contributes to the Zn(2+) binding site.

It belongs to the metallo-dependent hydrolases superfamily. Adenosine and AMP deaminases family. Monomer. Zn(2+) is required as a cofactor.

It catalyses the reaction N(6)-methyl-AMP + H2O + H(+) = IMP + methylamine. Its function is as follows. Catalyzes the hydrolysis of the free cytosolic methylated adenosine nucleotide N(6)-methyl-AMP (N6-mAMP) to produce inositol monophosphate (IMP) and methylamine. Is required for the catabolism of cytosolic N6-mAMP, which is derived from the degradation of mRNA containing N6-methylated adenine (m6A). The protein is N6-Methyl-AMP deaminase (Mapda) of Mus musculus (Mouse).